The chain runs to 164 residues: Phosphopantetheine adenylyltransferase (164 aa).

A substrate-binding site is contributed by Ser-9. Residues 9 to 10 (SF) and His-17 each bind ATP. 3 residues coordinate substrate: Lys-41, Thr-74, and Arg-88. ATP-binding positions include 89–91 (GVR), Glu-99, and 124–130 (NSFVASS).

This sequence belongs to the bacterial CoaD family. In terms of assembly, homohexamer. Requires Mg(2+) as cofactor.

It localises to the cytoplasm. It carries out the reaction (R)-4'-phosphopantetheine + ATP + H(+) = 3'-dephospho-CoA + diphosphate. It participates in cofactor biosynthesis; coenzyme A biosynthesis; CoA from (R)-pantothenate: step 4/5. Functionally, reversibly transfers an adenylyl group from ATP to 4'-phosphopantetheine, yielding dephospho-CoA (dPCoA) and pyrophosphate. This chain is Phosphopantetheine adenylyltransferase, found in Lactobacillus helveticus (strain DPC 4571).